The chain runs to 343 residues: GTPase Obg (343 aa).

Residues 2–160 form the Obg domain; it reads EKFVDRVKIF…RWIILELKLI (159 aa). Residues 161–332 enclose the OBG-type G domain; the sequence is ADVGLVGFPN…LKEGLWKKYE (172 aa). Residues 167–174, 192–196, 214–217, 284–287, and 313–315 contribute to the GTP site; these read GFPNAGKS, FTTLS, DIPG, NKID, and SAL. Residues serine 174 and threonine 194 each coordinate Mg(2+).

This sequence belongs to the TRAFAC class OBG-HflX-like GTPase superfamily. OBG GTPase family. Monomer. Mg(2+) is required as a cofactor.

The protein localises to the cytoplasm. In terms of biological role, an essential GTPase which binds GTP, GDP and possibly (p)ppGpp with moderate affinity, with high nucleotide exchange rates and a fairly low GTP hydrolysis rate. Plays a role in control of the cell cycle, stress response, ribosome biogenesis and in those bacteria that undergo differentiation, in morphogenesis control. This is GTPase Obg from Aquifex aeolicus (strain VF5).